We begin with the raw amino-acid sequence, 1050 residues long: Zinc finger and BTB domain-containing protein 11 (1050 aa).

The segment covering 143–156 (LDSGEESNESEDDL) has biased composition (acidic residues). Residues 143 to 173 (LDSGEESNESEDDLSNFTSPPSTASKSSKKK) form a disordered region. Low complexity predominate over residues 157-168 (SNFTSPPSTASK). The BTB domain maps to 214 to 282 (CDVTLLIEGE…AYTSVLSFDF (69 aa)). Disordered stretches follow at residues 373–514 (AEQN…EGGY) and 543–563 (LVQR…STEE). The segment covering 378–399 (EPEQQPAPQASPEAEASVSPVE) has biased composition (low complexity). Basic and acidic residues-rich tracts occupy residues 478–501 (SKDE…DTYR) and 553–563 (PKRDAKESTEE). 2 C2H2-type zinc fingers span residues 566–588 (HKCG…TLKH) and 594–616 (YKCP…LIRH). The segment at 617–641 (TRKEAPTSSSSNSTSTEASGGSSEK) is disordered. Residues 623–638 (TSSSSNSTSTEASGGS) are compositionally biased toward low complexity. 10 consecutive C2H2-type zinc fingers follow at residues 648-670 (FICS…MLKH), 676-698 (HACQ…QSLH), 704-726 (FQCE…MSIH), 732-754 (YFCS…LKKH), 763-785 (YHCT…MNKH), 791-813 (FQCQ…VKSH), 819-843 (YRCN…KATH), 855-877 (RVCD…MNNH), 883-905 (FECL…VRTH), and 911-934 (YVCP…TKFH).

It localises to the nucleus. The protein localises to the nucleolus. May be involved in transcriptional regulation. This chain is Zinc finger and BTB domain-containing protein 11, found in Mus musculus (Mouse).